A 130-amino-acid polypeptide reads, in one-letter code: Small ribosomal subunit protein uS9 (130 aa).

It belongs to the universal ribosomal protein uS9 family.

The protein is Small ribosomal subunit protein uS9 of Janthinobacterium sp. (strain Marseille) (Minibacterium massiliensis).